The primary structure comprises 1076 residues: MESSIFKPSSMDLIRAGLQDLDKARALFDQLKADDIPDERCAELLSALAHACDPDMALSNFVDIVNAMQSSQRDLEHVIPDNDALKRLVTVLGVSDAMGKFMRFKPQLVEAAAVDNCNSHLFNHAQRRARLLKAVGADPDEPAMPVASKDLAEAATALRSSYRNQLAAIIAQDAVADDPASIQPTISRELSDLADAALEGALAIARHETEGSEHVRFTIIGMGKLGAQELNYVSDVDLIYVVEPADKDVDHQTLIRVGTKMGTMLQRVCQSAIMGVAEQPLWQIDGGLRPEGKDGALVRVLSSHKNYYEQWAENWEFQALLKARPVAGDPDLGRAYMDMTRPFVWSASKRKNFVYDCQKMRKRVEDLIPAPLKDREIKLGRGGLRDVEFTVQMLQLVHGRTDESLRTSNTLDSLQRLSEGGYVSRKQAVRMSQDYRFERVMEHRQQIWSLKRTHLFPDLGRASVGGLEKKRDIDVDELNQNQELRRLARAFGLHPEELVDKYDDTRREVRHLHLDIYYRPMLPVNAQMENDQIVLSVEAAQERFESIGFGDPDAAIRHVQALTAGVGRAAKINRIILPAVLQWLGEGQNPDMGLLNWRKLEENFGTESGYLGFLRDSTSAAQRLCHILSNSRFLGDALNKSVESISWLGDDDNLQARTREALDVQTGSALERFGSNINEFATSMRAMRRHEIERIGLSWMSGVISDSDSLKAMTDVYDAIIDASLTWAVRHQIAEFGVETAPAGITVIAMGRYGGREVNFSSDADAILIYRPADDADDGQANAFAKKVVEDLRNILQGPTTLEPKIELDLDLRPEGKNGPLVRSYASCEEYYESWASTWERQALLRARYAAGDAELARDFLINIADPLRYPTTELTEAELQNIRKLKARMEAERLPRGVRRERHLKLGKGGLSDVEWTVQLMQLQHAGDIKDLRVNGTLEALDVLEAKKLISAIDAIQLRKAWTLCTAARNGSYLWSGRANQADILPDDIYSLGGIAVYLGYGAHRGQHFENDLLAVMRKCRDVCQRLFYGKTEGEAAAATTATASAATQQPQTAPRPRMHVIAPRLERNRRRAQR.

An adenylyl removase region spans residues 1–521; the sequence is MESSIFKPSS…LHLDIYYRPM (521 aa). The tract at residues 524–1076 is adenylyl transferase; it reads VNAQMENDQI…LERNRRRAQR (553 aa). Residues 1042–1056 show a composition bias toward low complexity; the sequence is TATASAATQQPQTAP. The disordered stretch occupies residues 1042 to 1076; sequence TATASAATQQPQTAPRPRMHVIAPRLERNRRRAQR.

It belongs to the GlnE family. The cofactor is Mg(2+).

The catalysed reaction is [glutamine synthetase]-O(4)-(5'-adenylyl)-L-tyrosine + phosphate = [glutamine synthetase]-L-tyrosine + ADP. It carries out the reaction [glutamine synthetase]-L-tyrosine + ATP = [glutamine synthetase]-O(4)-(5'-adenylyl)-L-tyrosine + diphosphate. Its function is as follows. Involved in the regulation of glutamine synthetase GlnA, a key enzyme in the process to assimilate ammonia. When cellular nitrogen levels are high, the C-terminal adenylyl transferase (AT) inactivates GlnA by covalent transfer of an adenylyl group from ATP to specific tyrosine residue of GlnA, thus reducing its activity. Conversely, when nitrogen levels are low, the N-terminal adenylyl removase (AR) activates GlnA by removing the adenylyl group by phosphorolysis, increasing its activity. The regulatory region of GlnE binds the signal transduction protein PII (GlnB) which indicates the nitrogen status of the cell. This Bifidobacterium longum (strain NCC 2705) protein is Bifunctional glutamine synthetase adenylyltransferase/adenylyl-removing enzyme.